We begin with the raw amino-acid sequence, 357 residues long: Glutamine synthetase cytosolic isozyme 1-2 (357 aa).

The region spanning 19 to 99 is the GS beta-grasp domain; it reads IIAEYIWVGG…VMCDCYTPQG (81 aa). Positions 106 to 357 constitute a GS catalytic domain; sequence KRHSAAKIFS…AETTLLWKQN (252 aa).

It belongs to the glutamine synthetase family. Homooctamer. As to expression, expressed in roots and at lower levels in leaf blades and spikelets (rice flower).

Its subcellular location is the cytoplasm. It carries out the reaction L-glutamate + NH4(+) + ATP = L-glutamine + ADP + phosphate + H(+). Its function is as follows. High-affinity glutamine synthetase involved in ammonium assimilation. Plays an important role in the primary assimilation of ammonium taken up by roots. Plays a role in maintaining nitrogen metabolic balance during ammonium assimilation, thus controlling plant growth and development. Reassimilates ammonium generated during lignification within developing tillers, which is probably required for the outgrowth of axillary buds. Required for nitrogen-dependent biosynthesis of cytokinin. Active cytokinin in axillary bud meristem is required for axillary bud outgrowth and necessary for tillering. The sequence is that of Glutamine synthetase cytosolic isozyme 1-2 from Oryza sativa subsp. japonica (Rice).